The following is a 303-amino-acid chain: Phosphatidylglycerol--prolipoprotein diacylglyceryl transferase (303 aa).

Helical transmembrane passes span 18-38, 58-78, 106-126, and 133-153; these read LGPFSLRWYGLLIAISVLVGL, LLPILVLASVIGARIYYVAFE, IWGGGIAIHGALIMGTLSIIF, and EPFWDVIDVLVPSVALGQAIG. Residue R154 coordinates a 1,2-diacyl-sn-glycero-3-phospho-(1'-sn-glycerol). Helical transmembrane passes span 193-213, 223-243, and 266-286; these read PTFLYESVWNIFVFGILIFLF, LPPGSLSCLYLITYSLGRFWI, and IAQLISLFLISAGLLGIWRIY.

The protein belongs to the Lgt family.

The protein resides in the cell inner membrane. The catalysed reaction is L-cysteinyl-[prolipoprotein] + a 1,2-diacyl-sn-glycero-3-phospho-(1'-sn-glycerol) = an S-1,2-diacyl-sn-glyceryl-L-cysteinyl-[prolipoprotein] + sn-glycerol 1-phosphate + H(+). It participates in protein modification; lipoprotein biosynthesis (diacylglyceryl transfer). In terms of biological role, catalyzes the transfer of the diacylglyceryl group from phosphatidylglycerol to the sulfhydryl group of the N-terminal cysteine of a prolipoprotein, the first step in the formation of mature lipoproteins. The chain is Phosphatidylglycerol--prolipoprotein diacylglyceryl transferase from Prochlorococcus marinus (strain NATL1A).